The primary structure comprises 321 residues: Transmembrane protein 255A (321 aa).

The next 4 helical transmembrane spans lie at 29-49, 56-76, 88-108, and 200-220; these read VFVT…GMAA, VTVG…LGII, LVAS…CAIV, and TILN…LGGF. The segment covering 279-297 has biased composition (polar residues); sequence STPSGLSDDPNGQASSFMW. Residues 279 to 300 are disordered; it reads STPSGLSDDPNGQASSFMWPSN.

Belongs to the TMEM255 family.

It localises to the membrane. This chain is Transmembrane protein 255A (tmem255a), found in Xenopus laevis (African clawed frog).